The following is an 84-amino-acid chain: UPF0729 protein F18A11.3 (84 aa).

The chain crosses the membrane as a helical span at residues Met1–Met21.

It belongs to the UPF0729 family.

The protein localises to the cell membrane. The chain is UPF0729 protein F18A11.3 from Caenorhabditis elegans.